A 389-amino-acid polypeptide reads, in one-letter code: Lipid-A-disaccharide synthase (389 aa).

Belongs to the LpxB family.

The catalysed reaction is a lipid X + a UDP-2-N,3-O-bis[(3R)-3-hydroxyacyl]-alpha-D-glucosamine = a lipid A disaccharide + UDP + H(+). It participates in bacterial outer membrane biogenesis; LPS lipid A biosynthesis. Functionally, condensation of UDP-2,3-diacylglucosamine and 2,3-diacylglucosamine-1-phosphate to form lipid A disaccharide, a precursor of lipid A, a phosphorylated glycolipid that anchors the lipopolysaccharide to the outer membrane of the cell. The polypeptide is Lipid-A-disaccharide synthase (Paraburkholderia phymatum (strain DSM 17167 / CIP 108236 / LMG 21445 / STM815) (Burkholderia phymatum)).